Here is a 458-residue protein sequence, read N- to C-terminus: tRNA modification GTPase MnmE (458 aa).

(6S)-5-formyl-5,6,7,8-tetrahydrofolate is bound by residues arginine 22, glutamate 84, and arginine 123. Residues glycine 220–phenylalanine 379 form the TrmE-type G domain. Asparagine 230 is a K(+) binding site. GTP contacts are provided by residues asparagine 230–serine 235, threonine 249–threonine 255, and aspartate 274–glycine 277. Serine 234 contacts Mg(2+). The K(+) site is built by threonine 249, isoleucine 251, and threonine 254. Threonine 255 is a Mg(2+) binding site. Lysine 458 serves as a coordination point for (6S)-5-formyl-5,6,7,8-tetrahydrofolate.

This sequence belongs to the TRAFAC class TrmE-Era-EngA-EngB-Septin-like GTPase superfamily. TrmE GTPase family. In terms of assembly, homodimer. Heterotetramer of two MnmE and two MnmG subunits. The cofactor is K(+).

It localises to the cytoplasm. In terms of biological role, exhibits a very high intrinsic GTPase hydrolysis rate. Involved in the addition of a carboxymethylaminomethyl (cmnm) group at the wobble position (U34) of certain tRNAs, forming tRNA-cmnm(5)s(2)U34. This is tRNA modification GTPase MnmE from Bacillus thuringiensis (strain Al Hakam).